The following is a 307-amino-acid chain: MIDLDNIIERLYEKQLIAESVIAYLCSLAKEVLMQESNVVRLSTPITVVGDIHGQFDDLLEIFRIGGPCPYTNYLFLGDYVDRGYYSIETITLLICLKLRYPKRITLLRGNHESRGITQTYGFYSECLRKYGNANVWKYFTDIFDFLTLSATIDDTIFCVHGGLSPSIQHIDQILVLDRFREFPHEGPMADLVWSDPDPSVQEFSLSPRGAGFSFGEVIVTKFLEYNNMKHILRAHQLCSEGYQILFEKKLSTVWSAPNYCYRCANLASILQIDTDQSRFFNVFDAAPNQETPFVEPAAKVTAEYFL.

Mn(2+)-binding residues include D51, H53, D79, and N111. The active-site Proton donor is the H112. 2 residues coordinate Mn(2+): H161 and H236.

Belongs to the PPP phosphatase family. PP-X subfamily. Mn(2+) serves as cofactor.

The catalysed reaction is O-phospho-L-seryl-[protein] + H2O = L-seryl-[protein] + phosphate. It catalyses the reaction O-phospho-L-threonyl-[protein] + H2O = L-threonyl-[protein] + phosphate. The sequence is that of Putative serine/threonine-protein phosphatase C22H10.04 from Schizosaccharomyces pombe (strain 972 / ATCC 24843) (Fission yeast).